A 571-amino-acid chain; its full sequence is Proline--tRNA ligase (571 aa).

It belongs to the class-II aminoacyl-tRNA synthetase family. ProS type 1 subfamily. As to quaternary structure, homodimer.

It is found in the cytoplasm. It carries out the reaction tRNA(Pro) + L-proline + ATP = L-prolyl-tRNA(Pro) + AMP + diphosphate. Functionally, catalyzes the attachment of proline to tRNA(Pro) in a two-step reaction: proline is first activated by ATP to form Pro-AMP and then transferred to the acceptor end of tRNA(Pro). As ProRS can inadvertently accommodate and process non-cognate amino acids such as alanine and cysteine, to avoid such errors it has two additional distinct editing activities against alanine. One activity is designated as 'pretransfer' editing and involves the tRNA(Pro)-independent hydrolysis of activated Ala-AMP. The other activity is designated 'posttransfer' editing and involves deacylation of mischarged Ala-tRNA(Pro). The misacylated Cys-tRNA(Pro) is not edited by ProRS. The polypeptide is Proline--tRNA ligase (Haemophilus ducreyi (strain 35000HP / ATCC 700724)).